Here is a 209-residue protein sequence, read N- to C-terminus: Cytidylate kinase (209 aa).

Residue 7 to 15 (GVAASGKSS) participates in ATP binding.

Belongs to the cytidylate kinase family. Type 1 subfamily.

It is found in the cytoplasm. It catalyses the reaction CMP + ATP = CDP + ADP. The catalysed reaction is dCMP + ATP = dCDP + ADP. The protein is Cytidylate kinase of Deinococcus geothermalis (strain DSM 11300 / CIP 105573 / AG-3a).